The primary structure comprises 485 residues: Pumilio domain-containing protein 6 (485 aa).

Disordered stretches follow at residues 29 to 48 (NKTHKNKNPKPPVKLLPYRH) and 55 to 76 (SDLDNYIFNSGSGSSDDETPPP). The segment covering 55–68 (SDLDNYIFNSGSGS) has biased composition (polar residues). Pumilio repeat units follow at residues 86–124 (EVLLNGLLIDFAIDPSGVKFLEANYPLDSEDQIRKAVFE), 125–163 (KLTESTTLFVGLCHSRNGNFIVQKLVELATPAEQRELLR), 164–200 (QMIDGGLLVMCKDKFACRVVQLALQKFDHSNVFQLIQ), 201–236 (ELSTFDLAAMCTDQISIHVIQRVVKQLPVDMWTFFV), 237–279 (HFLS…FRIQ), 287–324 (CIVRNCYRLSSNEFANYVIQYVIKSSGIMEMYRDTIID), 326–361 (CLLRNLLSMSQDKYASHVIEGAFLFAPPALLHEMME), and 372–411 (ELNRDALDILLFHQYGNYVVQQMISICTAALIGKEERQLP). Positions 439 to 454 (FSSGKKIIDSVMRHGV) are RNA-binding.

Functionally, RNA-binding protein that binds to the consensus sequence 5'-CUCUGUAUCUUGU-3' in mRNA 3'-UTRs and modulates mRNA expression and stability. Functions redundantly with puf-5 and puf-7 in oocyte formation and organization, early embryonic cell divisions, and repression of expression of glp-1 and other maternal mRNAs in late oogenesis. In Caenorhabditis elegans, this protein is Pumilio domain-containing protein 6.